The sequence spans 192 residues: uncharacterized protein (192 aa).

Helical transmembrane passes span 5-22 (VPPL…GIGL), 42-61 (FLFL…HYVY), 66-88 (LRFL…SGKL), 101-118 (WGLL…ALNL), 122-139 (LVMW…STIL), and 159-181 (ALLL…LWLF).

It is found in the cell membrane. This is an uncharacterized protein from Treponema pallidum (strain Nichols).